A 242-amino-acid chain; its full sequence is MNKRFNSEDKIILAIDGLDVSQAKLLLEECPNIKWVKVGLELFVREGPRVIEILKGLNKKIFLDLKFHDIPNTMRAACSQVSKLGVDIISIHASAGLKALKDSKKASLEGATSVSVKPPLVVGITVLTSFSLKDFQTDLDRNNSIEENVLRLAKLSFDAGLDGCVCSPWEAKMLRSIYKDNFELITPGIRLNIDNKDDQNRIMTPSEAIDNGASKLVIGRSISKAIDPNKALIEIFKSIDSD.

Substrate is bound by residues Asp16, Lys37, 64–73, Thr128, Arg190, Gln199, Gly219, and Arg220; that span reads DLKFHDIPNT. Lys66 functions as the Proton donor in the catalytic mechanism.

It belongs to the OMP decarboxylase family. Type 1 subfamily. Homodimer.

It catalyses the reaction orotidine 5'-phosphate + H(+) = UMP + CO2. The protein operates within pyrimidine metabolism; UMP biosynthesis via de novo pathway; UMP from orotate: step 2/2. Functionally, catalyzes the decarboxylation of orotidine 5'-monophosphate (OMP) to uridine 5'-monophosphate (UMP). The protein is Orotidine 5'-phosphate decarboxylase of Prochlorococcus marinus (strain MIT 9215).